Consider the following 112-residue polypeptide: UPF0102 protein NIS_1551 (112 aa).

This sequence belongs to the UPF0102 family.

The protein is UPF0102 protein NIS_1551 of Nitratiruptor sp. (strain SB155-2).